Consider the following 1944-residue polypeptide: Anaphase-promoting complex subunit 1 (1944 aa).

Residues S51 and S60 each carry the phosphoserine modification. A Phosphothreonine modification is found at T291. The tract at residues 312–343 (ESPVASPFQNYSSIHSQSRSTSSPSLHSRSPS) is disordered. Phosphoserine occurs at positions 313, 341, 343, 355, 362, 373, and 377. The segment covering 323–343 (SSIHSQSRSTSSPSLHSRSPS) has biased composition (low complexity). Residues 370–395 (NLSSHSQSPKRHSISHSPSGSFNDSF) form a disordered region. The span at 384–393 (SHSPSGSFND) shows a compositional bias: polar residues. T537 is modified (phosphothreonine). S547 and S555 each carry phosphoserine. Y571 carries the phosphotyrosine modification. 3 positions are modified to phosphoserine: S680, S686, and S688. The disordered stretch occupies residues 991–1014 (NLPRGKSVLSSEVSSGTEAEEEDD). The span at 998-1007 (VLSSEVSSGT) shows a compositional bias: polar residues. PC repeat units lie at residues 1297–1325 (AAGL…PEQL), 1366–1404 (GATL…PEFL), 1467–1501 (GACL…YLSA), and 1520–1552 (LLSL…EMNY).

Belongs to the APC1 family. In terms of assembly, the mammalian APC/C is composed at least of 14 distinct subunits ANAPC1, ANAPC2, CDC27/APC3, ANAPC4, ANAPC5, CDC16/APC6, ANAPC7, CDC23/APC8, ANAPC10, ANAPC11, CDC26/APC12, ANAPC13, ANAPC15 and ANAPC16 that assemble into a complex of at least 19 chains with a combined molecular mass of around 1.2 MDa; APC/C interacts with FZR1 and FBXO5. Phosphorylated. Phosphorylation on Ser-355 occurs specifically during mitosis. As to expression, abundantly expressed in proliferating fibroblasts, juvenile testis, adult brain and epididymis.

The protein operates within protein modification; protein ubiquitination. Component of the anaphase promoting complex/cyclosome (APC/C), a cell cycle-regulated E3 ubiquitin ligase that controls progression through mitosis and the G1 phase of the cell cycle. The APC/C complex acts by mediating ubiquitination and subsequent degradation of target proteins: it mainly mediates the formation of 'Lys-11'-linked polyubiquitin chains and, to a lower extent, the formation of 'Lys-48'- and 'Lys-63'-linked polyubiquitin chains. The APC/C complex catalyzes assembly of branched 'Lys-11'-/'Lys-48'-linked branched ubiquitin chains on target proteins. The polypeptide is Anaphase-promoting complex subunit 1 (Anapc1) (Mus musculus (Mouse)).